We begin with the raw amino-acid sequence, 226 residues long: Histone H1.5 (226 aa).

The segment covering 1–16 (MSETAPAETATPAPVE) has biased composition (low complexity). The disordered stretch occupies residues 1–44 (MSETAPAETATPAPVEKSPAKKKATKKAAGAGAAKRKATGPPVS). Ser-2 carries the N-acetylserine; partial modification. At Ser-2 the chain carries Phosphoserine. Thr-11 carries the phosphothreonine; by GSK3 modification. Lys-17 is modified (N6-acetyllysine). Residue Ser-18 is modified to Phosphoserine. Residue Lys-27 is modified to N6-methyllysine. Lys-37 carries the post-translational modification N6-(beta-hydroxybutyryl)lysine; alternate. Lys-37 bears the N6-succinyllysine; alternate mark. Thr-39 carries the phosphothreonine modification. One can recognise an H15 domain in the interval 39-112 (TGPPVSELIT…GASGSFKLNK (74 aa)). The residue at position 49 (Lys-49) is an N6-acetyllysine. Residue Lys-55 is modified to N6-(beta-hydroxybutyryl)lysine. Arg-57 carries the post-translational modification Citrulline. Position 67 is an N6-(beta-hydroxybutyryl)lysine (Lys-67). Lys-78 bears the N6-acetyllysine mark. N6-(beta-hydroxybutyryl)lysine occurs at positions 88, 93, and 109. The disordered stretch occupies residues 98 to 226 (QTKGTGASGS…KAKKAAAKKK (129 aa)). Residues 122-133 (KAKKAGAAKAKK) show a composition bias toward basic residues. Thr-138 and Thr-155 each carry phosphothreonine. The span at 140-161 (KKAKKAAGAKKAVKKTPKKAKK) shows a compositional bias: basic residues. Lys-168 is modified (N6-acetyllysine). Positions 169–187 (KVAKSPKKAKAAAKPKKAT) are enriched in basic residues. Ser-173 and Ser-189 each carry phosphoserine. A compositionally biased stretch (basic residues) spans 194-226 (KAVKPKAAKPKAAKPKAAKPKAAKAKKAAAKKK).

It belongs to the histone H1/H5 family. In terms of assembly, interacts with MSX1. H1 histones are progressively phosphorylated during the cell cycle, becoming maximally phosphorylated during late G2 phase and M phase, and being dephosphorylated sharply thereafter. Phosphorylated at Thr-11 by GSK3B during mitosis in prometaphase and dephosphorylated in telophase. Post-translationally, citrullination at Arg-57 (H1R54ci) by PADI4 takes place within the DNA-binding site of H1 and results in its displacement from chromatin and global chromatin decondensation, thereby promoting pluripotency and stem cell maintenance. As to expression, ubiquitous. Expressed in the majority of the cell lines tested and in testis.

The protein resides in the nucleus. Its subcellular location is the chromosome. Histone H1 protein binds to linker DNA between nucleosomes forming the macromolecular structure known as the chromatin fiber. Histones H1 are necessary for the condensation of nucleosome chains into higher-order structured fibers. Also acts as a regulator of individual gene transcription through chromatin remodeling, nucleosome spacing and DNA methylation. This is Histone H1.5 from Homo sapiens (Human).